Here is a 400-residue protein sequence, read N- to C-terminus: Formate-dependent phosphoribosylglycinamide formyltransferase (400 aa).

Residues 22–23 and Glu82 contribute to the N(1)-(5-phospho-beta-D-ribosyl)glycinamide site; that span reads EL. Residues Arg115, Lys156, 161 to 166, 196 to 199, and Glu204 contribute to the ATP site; these read SSGKGQ and EGFI. Positions 120–309 constitute an ATP-grasp domain; the sequence is RLAAETLCLP…EFALHARAIL (190 aa). Mg(2+) is bound by residues Glu268 and Glu280. Residues Asp287, Lys361, and 368-369 contribute to the N(1)-(5-phospho-beta-D-ribosyl)glycinamide site; that span reads RR.

It belongs to the PurK/PurT family. In terms of assembly, homodimer.

The catalysed reaction is N(1)-(5-phospho-beta-D-ribosyl)glycinamide + formate + ATP = N(2)-formyl-N(1)-(5-phospho-beta-D-ribosyl)glycinamide + ADP + phosphate + H(+). Its pathway is purine metabolism; IMP biosynthesis via de novo pathway; N(2)-formyl-N(1)-(5-phospho-D-ribosyl)glycinamide from N(1)-(5-phospho-D-ribosyl)glycinamide (formate route): step 1/1. Involved in the de novo purine biosynthesis. Catalyzes the transfer of formate to 5-phospho-ribosyl-glycinamide (GAR), producing 5-phospho-ribosyl-N-formylglycinamide (FGAR). Formate is provided by PurU via hydrolysis of 10-formyl-tetrahydrofolate. The chain is Formate-dependent phosphoribosylglycinamide formyltransferase from Xanthomonas euvesicatoria pv. vesicatoria (strain 85-10) (Xanthomonas campestris pv. vesicatoria).